The chain runs to 607 residues: V-type proton ATPase catalytic subunit A (607 aa).

ATP is bound at residue 251 to 258; that stretch reads GAFGCGKT.

It belongs to the ATPase alpha/beta chains family. In terms of assembly, V-ATPase is a heteromultimeric enzyme composed of a peripheral catalytic V1 complex (components A to H) attached to an integral membrane V0 proton pore complex (components: a, c, c', c'', d, e, f and VOA1).

Its subcellular location is the vacuole membrane. The catalysed reaction is ATP + H2O + 4 H(+)(in) = ADP + phosphate + 5 H(+)(out). Catalytic subunit of the V1 complex of vacuolar(H+)-ATPase (V-ATPase), a multisubunit enzyme composed of a peripheral complex (V1) that hydrolyzes ATP and a membrane integral complex (V0) that translocates protons. V-ATPase is responsible for acidifying and maintaining the pH of intracellular compartments. This Encephalitozoon cuniculi (strain GB-M1) (Microsporidian parasite) protein is V-type proton ATPase catalytic subunit A (VMA1).